A 668-amino-acid polypeptide reads, in one-letter code: Golgin subfamily A member 6-like protein 1 (668 aa).

5 disordered regions span residues 1–120 (MLMW…HQEA), 323–356 (IREQ…RQEE), 384–466 (EKMH…EMWR), 481–591 (KEKM…REQE), and 603–639 (EQEE…MRRQ). The segment covering 15-41 (LPTHPHLPTHPHLPTHPHLPTHPHLPT) has biased composition (basic residues). A compositionally biased stretch (basic and acidic residues) spans 51–72 (MSKETRQSKLAEAKEQLTDHHP). Polar residues-rich tracts occupy residues 73-83 (QTNPSVGTAAS) and 91-103 (NNGT…TSGG). Residues 106–120 (SPEDEQKASHQHQEA) show a composition bias toward basic and acidic residues. Positions 177-663 (LEQALSAVAT…EEKMQEHQEH (487 aa)) form a coiled coil.

This sequence belongs to the GOLGA6 family.

The chain is Golgin subfamily A member 6-like protein 1 (GOLGA6L1) from Homo sapiens (Human).